A 393-amino-acid chain; its full sequence is Acetylornithine aminotransferase 1 (393 aa).

Residue Arg131 coordinates N(2)-acetyl-L-ornithine. 215-218 contacts pyridoxal 5'-phosphate; the sequence is DEVQ. Lys244 carries the N6-(pyridoxal phosphate)lysine modification. Thr272 lines the N(2)-acetyl-L-ornithine pocket. Thr273 serves as a coordination point for pyridoxal 5'-phosphate.

Belongs to the class-III pyridoxal-phosphate-dependent aminotransferase family. ArgD subfamily. In terms of assembly, homodimer. Requires pyridoxal 5'-phosphate as cofactor.

It is found in the cytoplasm. It carries out the reaction N(2)-acetyl-L-ornithine + 2-oxoglutarate = N-acetyl-L-glutamate 5-semialdehyde + L-glutamate. The protein operates within amino-acid biosynthesis; L-arginine biosynthesis; N(2)-acetyl-L-ornithine from L-glutamate: step 4/4. This chain is Acetylornithine aminotransferase 1, found in Bordetella pertussis (strain Tohama I / ATCC BAA-589 / NCTC 13251).